The chain runs to 424 residues: D-inositol 3-phosphate glycosyltransferase (424 aa).

Residues histidine 9, 20–25 (DAGGMN), lysine 78, tyrosine 110, threonine 134, and arginine 154 each bind 1D-myo-inositol 3-phosphate. Glycine 23 provides a ligand contact to UDP-N-acetyl-alpha-D-glucosamine. Arginine 231, lysine 236, and arginine 295 together coordinate UDP-N-acetyl-alpha-D-glucosamine. Residues tyrosine 304, glutamine 305, and alanine 307 each coordinate Mg(2+). The UDP-N-acetyl-alpha-D-glucosamine site is built by glutamate 317 and glutamate 325. Residue threonine 331 coordinates Mg(2+).

Belongs to the glycosyltransferase group 1 family. MshA subfamily. Homodimer.

The enzyme catalyses 1D-myo-inositol 3-phosphate + UDP-N-acetyl-alpha-D-glucosamine = 1D-myo-inositol 2-acetamido-2-deoxy-alpha-D-glucopyranoside 3-phosphate + UDP + H(+). Catalyzes the transfer of a N-acetyl-glucosamine moiety to 1D-myo-inositol 3-phosphate to produce 1D-myo-inositol 2-acetamido-2-deoxy-glucopyranoside 3-phosphate in the mycothiol biosynthesis pathway. The chain is D-inositol 3-phosphate glycosyltransferase from Corynebacterium urealyticum (strain ATCC 43042 / DSM 7109).